The sequence spans 467 residues: 3-isopropylmalate dehydratase large subunit (467 aa).

Cysteine 347, cysteine 407, and cysteine 410 together coordinate [4Fe-4S] cluster.

It belongs to the aconitase/IPM isomerase family. LeuC type 1 subfamily. As to quaternary structure, heterodimer of LeuC and LeuD. It depends on [4Fe-4S] cluster as a cofactor.

The catalysed reaction is (2R,3S)-3-isopropylmalate = (2S)-2-isopropylmalate. It participates in amino-acid biosynthesis; L-leucine biosynthesis; L-leucine from 3-methyl-2-oxobutanoate: step 2/4. Functionally, catalyzes the isomerization between 2-isopropylmalate and 3-isopropylmalate, via the formation of 2-isopropylmaleate. The polypeptide is 3-isopropylmalate dehydratase large subunit (Synechococcus sp. (strain JA-3-3Ab) (Cyanobacteria bacterium Yellowstone A-Prime)).